The primary structure comprises 143 residues: Large ribosomal subunit protein uL11 (143 aa).

Belongs to the universal ribosomal protein uL11 family. As to quaternary structure, part of the ribosomal stalk of the 50S ribosomal subunit. Interacts with L10 and the large rRNA to form the base of the stalk. L10 forms an elongated spine to which L12 dimers bind in a sequential fashion forming a multimeric L10(L12)X complex. Post-translationally, one or more lysine residues are methylated.

Forms part of the ribosomal stalk which helps the ribosome interact with GTP-bound translation factors. In Koribacter versatilis (strain Ellin345), this protein is Large ribosomal subunit protein uL11.